A 426-amino-acid polypeptide reads, in one-letter code: Putative nickel insertion protein (426 aa).

Belongs to the LarC family.

This Nostoc sp. (strain PCC 7120 / SAG 25.82 / UTEX 2576) protein is Putative nickel insertion protein.